The primary structure comprises 1502 residues: Heme-responsive zinc finger transcription factor HAP1 (1502 aa).

A compositionally biased stretch (polar residues) spans 1-50 (MSNTPYNSSVPSIASMTQSSVSRSPNMHTATTPGANTSSNSPPLHMSSDS). The interval 1–56 (MSNTPYNSSVPSIASMTQSSVSRSPNMHTATTPGANTSSNSPPLHMSSDSSKIKRK) is disordered. Zn(2+) contacts are provided by cysteine 64, cysteine 67, cysteine 74, cysteine 81, cysteine 84, and cysteine 93. Residues 64 to 93 (CTICRKRKVKCDKLRPHCQQCTKTGVAHLC) constitute a DNA-binding region (zn(2)-C6 fungal-type). Residues 105 to 134 (EKELLKDNELKKLRERVKSLEKTLSKVHSS) adopt a coiled-coil conformation. The segment at 126–208 (KTLSKVHSSP…ANSSSLSISN (83 aa)) is disordered. Positions 130–142 (KVHSSPSSNSLKS) are enriched in low complexity. Polar residues-rich tracts occupy residues 143–152 (YNTPESSNLF) and 160–176 (TLVN…SHMH). A compositionally biased stretch (low complexity) spans 177–208 (QQQQQQQQQEQQQDFSRSANANANSSSLSISN). Residues 244–444 (KGDPYLKLLW…NTIPHHQPQS (201 aa)) are heme-responsive; required for HMC formation. HRM repeat units follow at residues 280–285 (KCPINH), 299–304 (KCPVDH), 323–328 (KCPVDH), 347–352 (RCPVDH), 389–394 (KCPVDH), and 415–420 (RCPIDH). Polar residues-rich tracts occupy residues 432-447 (STHN…SGSH) and 706-734 (QLNA…NPTL). Disordered regions lie at residues 432–458 (STHN…SRKH) and 706–767 (QLNA…KENQ). Residues 735–759 (NNNMSAATTNSSSRSGSADSRSGSN) show a composition bias toward low complexity. An HRM 7 repeat occupies 1192-1197 (KCPVYQ). The segment at 1384-1411 (TANTDTSANGSALSTLTSPQGSDLASNS) is disordered. A compositionally biased stretch (polar residues) spans 1388–1411 (DTSANGSALSTLTSPQGSDLASNS).

In terms of assembly, binds DNA as a homodimer. Interacts with SRO9 and YDJ1. In the absence of heme, binds to at least four cellular proteins, including YDJ1 and SRO9, forming a high-molecular-weight complex (HMC) which results in repression of its activity and dictates its DNA-binding specificity.

The protein localises to the nucleus. Its function is as follows. Regulation of oxygen dependent gene expression. It modulates the expression of Iso-1 (CYP1) and Iso-2 (CYP3) cytochrome c. In response to heme, promotes transcription of genes encoding functions required for respiration, controlling oxidative damage and repression of anaerobic genes. Binds to the sequence 5'-CGGNNNTNNCGG-3'. Is non-functional in terms of iso-1 cytochrome c expression in strain S288c and its derivatives. The chain is Heme-responsive zinc finger transcription factor HAP1 (HAP1) from Saccharomyces cerevisiae (strain ATCC 204508 / S288c) (Baker's yeast).